A 115-amino-acid chain; its full sequence is Large ribosomal subunit protein bL19 (115 aa).

The protein belongs to the bacterial ribosomal protein bL19 family.

In terms of biological role, this protein is located at the 30S-50S ribosomal subunit interface and may play a role in the structure and function of the aminoacyl-tRNA binding site. The sequence is that of Large ribosomal subunit protein bL19 from Buchnera aphidicola subsp. Acyrthosiphon pisum (strain Tuc7).